A 612-amino-acid chain; its full sequence is Protein tipD (612 aa).

A disordered region spans residues 95 to 128; that stretch reads RNEKKTQQQPPSGSSKMDSSSSSSSSNRVSGMGS. Over residues 106–128 the composition is skewed to low complexity; the sequence is SGSSKMDSSSSSSSSNRVSGMGS. WD repeat units lie at residues 322 to 361, 364 to 403, 406 to 444, 447 to 486, 490 to 530, 535 to 576, and 582 to 611; these read GHNSEIYCMAFNSIGNLLATGGGDKCVKVWDVISGQQKST, GASQSIVSVSFSPNDESILGTSNDNSARLWNTELGRSRHT, GHIGKVYTGKFINSNRVVTGSHDRTIKLWDLQKGYCTRT, CFSSCNDLVILGGSGTHLASGHVDHSVRFWDSNAGEPTQV, IHEG…TIRT, EYRN…TVKV, and NNGSSVCCCSWSPLANIFISADKDKNIIQW.

This sequence belongs to the WD repeat tipD family.

In terms of biological role, not known; disruption of the gene for tipD results in morphological defects. This Dictyostelium discoideum (Social amoeba) protein is Protein tipD (tipD).